A 511-amino-acid polypeptide reads, in one-letter code: Mannosyl-oligosaccharide alpha-1,2-mannosidase (511 aa).

A signal peptide spans 1–35 (MRLPVSFPLTVLSLLGSTIAHPYGETEAVLRSEPK). A glycan (N-linked (GlcNAc...) asparagine) is linked at N182. Residues C332 and C361 are joined by a disulfide bond. N366 is a glycosylation site (N-linked (GlcNAc...) asparagine). D375 acts as the Proton donor in catalysis. N438 is a glycosylation site (N-linked (GlcNAc...) asparagine). T501 is a Ca(2+) binding site.

It belongs to the glycosyl hydrolase 47 family. As to quaternary structure, homodimer. Ca(2+) is required as a cofactor.

The protein localises to the secreted. The catalysed reaction is N(4)-(alpha-D-Man-(1-&gt;2)-alpha-D-Man-(1-&gt;2)-alpha-D-Man-(1-&gt;3)-[alpha-D-Man-(1-&gt;2)-alpha-D-Man-(1-&gt;3)-[alpha-D-Man-(1-&gt;2)-alpha-D-Man-(1-&gt;6)]-alpha-D-Man-(1-&gt;6)]-beta-D-Man-(1-&gt;4)-beta-D-GlcNAc-(1-&gt;4)-beta-D-GlcNAc)-L-asparaginyl-[protein] (N-glucan mannose isomer 9A1,2,3B1,2,3) + 4 H2O = N(4)-(alpha-D-Man-(1-&gt;3)-[alpha-D-Man-(1-&gt;3)-[alpha-D-Man-(1-&gt;6)]-alpha-D-Man-(1-&gt;6)]-beta-D-Man-(1-&gt;4)-beta-D-GlcNAc-(1-&gt;4)-beta-D-GlcNAc)-L-asparaginyl-[protein] (N-glucan mannose isomer 5A1,2) + 4 beta-D-mannose. It carries out the reaction N(4)-(alpha-D-Man-(1-&gt;2)-alpha-D-Man-(1-&gt;2)-alpha-D-Man-(1-&gt;3)-[alpha-D-Man-(1-&gt;3)-[alpha-D-Man-(1-&gt;2)-alpha-D-Man-(1-&gt;6)]-alpha-D-Man-(1-&gt;6)]-beta-D-Man-(1-&gt;4)-beta-D-GlcNAc-(1-&gt;4)-beta-D-GlcNAc)-L-asparaginyl-[protein] (N-glucan mannose isomer 8A1,2,3B1,3) + 3 H2O = N(4)-(alpha-D-Man-(1-&gt;3)-[alpha-D-Man-(1-&gt;3)-[alpha-D-Man-(1-&gt;6)]-alpha-D-Man-(1-&gt;6)]-beta-D-Man-(1-&gt;4)-beta-D-GlcNAc-(1-&gt;4)-beta-D-GlcNAc)-L-asparaginyl-[protein] (N-glucan mannose isomer 5A1,2) + 3 beta-D-mannose. It participates in protein modification; protein glycosylation. Its function is as follows. Involved in the maturation of Asn-linked oligosaccharides. Progressively trim alpha-1,2-linked mannose residues from Man(9)GlcNAc(2) to produce Man(5)GlcNAc(2). This Penicillium citrinum protein is Mannosyl-oligosaccharide alpha-1,2-mannosidase (MSDC).